The primary structure comprises 371 residues: Putative glutamate--cysteine ligase 2 (371 aa).

The protein belongs to the glutamate--cysteine ligase type 2 family. YbdK subfamily.

It carries out the reaction L-cysteine + L-glutamate + ATP = gamma-L-glutamyl-L-cysteine + ADP + phosphate + H(+). In terms of biological role, ATP-dependent carboxylate-amine ligase which exhibits weak glutamate--cysteine ligase activity. This is Putative glutamate--cysteine ligase 2 from Cupriavidus necator (strain ATCC 17699 / DSM 428 / KCTC 22496 / NCIMB 10442 / H16 / Stanier 337) (Ralstonia eutropha).